The chain runs to 27 residues: uncharacterized protein (27 aa).

The protein localises to the plastid. It localises to the cyanelle. This is an uncharacterized protein from Cyanophora paradoxa.